A 267-amino-acid chain; its full sequence is Ribosomal RNA large subunit methyltransferase E (267 aa).

Residues Gly-52, Phe-54, Asp-72, Asp-90, and Asp-114 each coordinate S-adenosyl-L-methionine. Residue Lys-154 is the Proton acceptor of the active site. Over residues 212 to 252 the composition is skewed to low complexity; the sequence is EAPRAPAPPEQAAAPEEATAPATRAARQKPAPAKKPAAAKR. The disordered stretch occupies residues 212–267; that stretch reads EAPRAPAPPEQAAAPEEATAPATRAARQKPAPAKKPAAAKRPAARKRAAKKPARRA. A compositionally biased stretch (basic residues) spans 253 to 267; the sequence is PAARKRAAKKPARRA.

Belongs to the class I-like SAM-binding methyltransferase superfamily. RNA methyltransferase RlmE family.

Its subcellular location is the cytoplasm. It catalyses the reaction uridine(2552) in 23S rRNA + S-adenosyl-L-methionine = 2'-O-methyluridine(2552) in 23S rRNA + S-adenosyl-L-homocysteine + H(+). Its function is as follows. Specifically methylates the uridine in position 2552 of 23S rRNA at the 2'-O position of the ribose in the fully assembled 50S ribosomal subunit. The protein is Ribosomal RNA large subunit methyltransferase E of Anaeromyxobacter dehalogenans (strain 2CP-C).